We begin with the raw amino-acid sequence, 321 residues long: Type 3 secretion system translocon protein SctB (321 aa).

The helical transmembrane segment at A99–I119 threads the bilayer.

This sequence belongs to the SctB/EspB family. The core secretion machinery of the T3SS is composed of approximately 20 different proteins, including cytoplasmic components, a base, an export apparatus and a needle. This subunit is involved in the formation of a pore, called the translocon, in host membrane.

It localises to the secreted. Its subcellular location is the cell surface. The protein localises to the host membrane. In terms of biological role, component of the type III secretion system (T3SS), also called injectisome, which is used to inject bacterial effector proteins into eukaryotic host cells. EspD and EspB are inserted into the host membrane where they form a pore and allow the translocation of effector proteins into the cytosol of target cells. Necessary for intimate attachment to epithelial cells. The polypeptide is Type 3 secretion system translocon protein SctB (Escherichia coli O127:H6 (strain E2348/69 / EPEC)).